Reading from the N-terminus, the 94-residue chain is Large ribosomal subunit protein bL25 (94 aa).

This sequence belongs to the bacterial ribosomal protein bL25 family. As to quaternary structure, part of the 50S ribosomal subunit; part of the 5S rRNA/L5/L18/L25 subcomplex. Contacts the 5S rRNA. Binds to the 5S rRNA independently of L5 and L18.

Its function is as follows. This is one of the proteins that binds to the 5S RNA in the ribosome where it forms part of the central protuberance. This chain is Large ribosomal subunit protein bL25, found in Yersinia pestis bv. Antiqua (strain Antiqua).